A 380-amino-acid chain; its full sequence is Crotonobetainyl-CoA reductase (380 aa).

This sequence belongs to the acyl-CoA dehydrogenase family. Homotetramer. FAD is required as a cofactor.

The protein resides in the cytoplasm. It carries out the reaction 4-(trimethylamino)butanoyl-CoA + oxidized [electron-transfer flavoprotein] + H(+) = crotonobetainyl-CoA + reduced [electron-transfer flavoprotein]. It functions in the pathway amine and polyamine metabolism; carnitine metabolism. Its function is as follows. Catalyzes the reduction of crotonobetainyl-CoA to gamma-butyrobetainyl-CoA. This chain is Crotonobetainyl-CoA reductase, found in Salmonella arizonae (strain ATCC BAA-731 / CDC346-86 / RSK2980).